The chain runs to 369 residues: uncharacterized protein (369 aa).

The next 9 membrane-spanning stretches (helical) occupy residues 25-45 (QFVALSIWIILITLFSLWYDW), 47-67 (FCLLNLTIVGFFIAFCYFVPA), 119-139 (LNIVHLFVISGFHLSFLFNLM), 152-172 (LSGFAVLLIYLFLVGFAFSAL), 206-226 (HALNNFGFNFSFLACFVLLFV), 235-255 (LKPLVSSSLILIVISPLSLYL), 272-292 (PIALFYFCVSWIILPFIGVFG), 296-316 (FGIYLPLKMLSEWSLKVTVFL), and 323-343 (LIFFFVYYGLLGLLYTIFTVA).

To B.subtilis ComEC.

It is found in the cell membrane. This is an uncharacterized protein from Mycoplasma genitalium (strain ATCC 33530 / DSM 19775 / NCTC 10195 / G37) (Mycoplasmoides genitalium).